The following is a 326-amino-acid chain: RNA-binding motif protein, X-linked 2 (326 aa).

A Glycyl lysine isopeptide (Lys-Gly) (interchain with G-Cter in SUMO2) cross-link involves residue lysine 8. The RRM domain maps to 36-114; sequence AWIFVGGLPY…RTIRVDHVSN (79 aa). The interval 117–326 is disordered; sequence APQESEDVDD…SYHGSDRRHH (210 aa). At threonine 140 the chain carries Phosphothreonine. Serine 149 is subject to Phosphoserine. The segment covering 157–172 has biased composition (basic residues); sequence TKKHKKDKKEKKKRKK. Positions 177–190 are enriched in polar residues; it reads GQAQAEQPSCSRSA. Basic and acidic residues-rich tracts occupy residues 191–200, 207–219, 236–245, and 255–273; these read TVKEKKDERA, KTSE…EHRE, ARAEDPECKA, and KSAS…ERGR. Serine 274 carries the phosphoserine modification. Residues 291 to 312 are compositionally biased toward basic residues; it reads HRSRSRSRSPDKSHRHKKYRHS. The span at 313 to 326 shows a compositional bias: basic and acidic residues; that stretch reads RERDSYHGSDRRHH.

This sequence belongs to the IST3 family. As to quaternary structure, part of the activated spliceosome B/catalytic step 1 spliceosome, one of the forms of the spliceosome which has a well-formed active site but still cannot catalyze the branching reaction and is composed of at least 52 proteins, the U2, U5 and U6 snRNAs and the pre-mRNA. Component of the minor spliceosome, which splices U12-type introns.

It localises to the nucleus. In terms of biological role, involved in pre-mRNA splicing as component of the activated spliceosome. As a component of the minor spliceosome, involved in the splicing of U12-type introns in pre-mRNAs. The chain is RNA-binding motif protein, X-linked 2 (Rbmx2) from Mus musculus (Mouse).